The sequence spans 1028 residues: Unconventional myosin-Ic (1028 aa).

Residue M1 is modified to N-acetylmethionine. A Myosin motor domain is found at 12 to 696 (GVQDFVLLEN…TLFATEDALE (685 aa)). ATP contacts are provided by residues N53, Y61, 104-113 (SGESGAGKTE), and 157-161 (NDNSS). Residue K348 is modified to N6-methyllysine. The interval 573 to 595 (LSKLMEILMSKQPSYVRCIKPND) is actin-binding. 2 consecutive IQ domains span residues 699 to 728 (KHSIATFLQARWRGYHQRQKFLHMKHSAVE) and 722 to 751 (MKHSAVEIQSWWRGTIGRRKAAKRKWAVDV). The 175-residue stretch at 850-1024 (KDNYPQSVPR…NGHLSVVAPR (175 aa)) folds into the TH1 domain.

The protein belongs to the TRAFAC class myosin-kinesin ATPase superfamily. Myosin family. In terms of assembly, interacts (via its IQ motifs) with calmodulin. In terms of tissue distribution, expressed in brain and the sacculus of the internal ear.

The protein localises to the cytoplasm. It localises to the cell membrane. Its subcellular location is the cell projection. The protein resides in the ruffle membrane. It is found in the cytoplasmic vesicle. The protein localises to the stereocilium membrane. Its function is as follows. Myosins are actin-based motor molecules with ATPase activity. Unconventional myosins serve in intracellular movements. Their highly divergent tails are presumed to bind to membranous compartments, which would be moved relative to actin filaments. The sequence is that of Unconventional myosin-Ic (Myo1c) from Aquarana catesbeiana (American bullfrog).